The chain runs to 509 residues: Scavenger receptor class B member 1 (509 aa).

Residues 1–11 are Cytoplasmic-facing; sequence MGVSSRARWVA. A helical membrane pass occupies residues 12 to 32; the sequence is LGLGVLGLLCAALGVIMILMV. Over 33–440 the chain is Extracellular; sequence PSLIKQQVLK…YTQLVLMPQV (408 aa). N-linked (GlcNAc...) asparagine glycans are attached at residues asparagine 102, asparagine 108, asparagine 116, asparagine 173, asparagine 212, asparagine 227, asparagine 255, asparagine 310, asparagine 330, and asparagine 383. Cysteine 251 and cysteine 384 are disulfide-bonded. The chain crosses the membrane as a helical span at residues 441–461; sequence LHYAQYVLLGLGGLLLLVPII. Residues 462 to 509 are Cytoplasmic-facing; sequence YQLRSQEKCFLFWSGSKKGSQDKEAMQAYSESLMSPAAKGTVLQEAKL.

It belongs to the CD36 family. As to quaternary structure, the C-terminal region binds to PDZK1. Post-translationally, N-glycosylated. The six cysteines of the extracellular domain are all involved in intramolecular disulfide bonds.

Its subcellular location is the cell membrane. The protein resides in the membrane. It localises to the caveola. Functionally, receptor for different ligands such as phospholipids, cholesterol ester, lipoproteins, phosphatidylserine and apoptotic cells. Receptor for HDL, mediating selective uptake of cholesteryl ether and HDL-dependent cholesterol efflux. Also facilitates the flux of free and esterified cholesterol between the cell surface and apoB-containing lipoproteins and modified lipoproteins, although less efficiently than HDL. May be involved in the phagocytosis of apoptotic cells, via its phosphatidylserine binding activity. This is Scavenger receptor class B member 1 (Scarb1) from Rattus norvegicus (Rat).